The chain runs to 86 residues: Small ribosomal subunit protein uS17 (86 aa).

It belongs to the universal ribosomal protein uS17 family. As to quaternary structure, part of the 30S ribosomal subunit.

Functionally, one of the primary rRNA binding proteins, it binds specifically to the 5'-end of 16S ribosomal RNA. The sequence is that of Small ribosomal subunit protein uS17 from Streptococcus thermophilus (strain CNRZ 1066).